The sequence spans 572 residues: Receptor-type adenylate cyclase GRESAG 4.2 (572 aa).

Residues 1–225 lie on the Extracellular side of the membrane; that stretch reads RKTLLTFGLN…PNGNALTPAQ (225 aa). 3 N-linked (GlcNAc...) asparagine glycosylation sites follow: Asn-10, Asn-77, and Asn-152. Residues 226–251 form a helical membrane-spanning segment; it reads LDWCGWCRFACADTGSRLTVFLCCIM. Residues 252–572 are Cytoplasmic-facing; that stretch reads RNKRDNDNAP…TVRRLSVALQ (321 aa). The 156-residue stretch at 269–424 folds into the Guanylate cyclase domain; it reads TLIFTDIESS…QTANTAARTE (156 aa). 2 residues coordinate Mg(2+): Asp-274 and Asp-317.

The protein belongs to the adenylyl cyclase class-3 family. It depends on Mg(2+) as a cofactor.

The protein localises to the cell membrane. The enzyme catalyses ATP = 3',5'-cyclic AMP + diphosphate. Functionally, could act as a receptor for an unknown ligand. This chain is Receptor-type adenylate cyclase GRESAG 4.2 (GRESAG 4.2), found in Trypanosoma brucei brucei.